Consider the following 516-residue polypeptide: uncharacterized protein (516 aa).

9 consecutive transmembrane segments (helical) span residues 183 to 203 (SAADLPIWEAASGAVLVGDGV), 261 to 281 (VLKTTFGFLAFGLIVSATYII), 308 to 328 (VMNGFLACLVMLATGIGTALL), 329 to 349 (LDHQFALVASVYLALTLAYSF), 356 to 376 (LLDVTVIGALFTLRIVMGQVL), 379 to 399 (LAFSPWLFSFSVMFFISLALA), 430 to 450 (LGHGLASASASIVIMLLFLAL), 461 to 481 (PAWLYVAPLGVSIWLQRIWLL), and 492 to 512 (IVFALNDKTSWFIGALIASAF).

Its subcellular location is the cell membrane. Its function is as follows. Possible permease/transporter. This is an uncharacterized protein from Sinorhizobium fredii (strain NBRC 101917 / NGR234).